Consider the following 220-residue polypeptide: Adenylate kinase (220 aa).

13 to 18 (GAGKGT) is a binding site for ATP. Positions 33–62 (ATGDMLRSQVARQTELGKEAKKIMDQGGLV) are NMP. AMP is bound by residues T34, R39, 60 to 62 (GLV), 89 to 92 (GFPR), and Q96. Positions 130–167 (GRLVHPGSGRSYHLEFNPPKVPMKDDVTGEPLIQRSDD) are LID. Residues R131 and 140-141 (SY) each bind ATP. AMP contacts are provided by R164 and R175. Q203 contributes to the ATP binding site.

The protein belongs to the adenylate kinase family. AK2 subfamily. In terms of assembly, monomer.

Its subcellular location is the cytoplasm. The protein localises to the cytosol. The protein resides in the mitochondrion intermembrane space. It is found in the nucleus. It carries out the reaction AMP + ATP = 2 ADP. In terms of biological role, catalyzes the reversible transfer of the terminal phosphate group between ATP and AMP. Plays an important role in cellular energy homeostasis and in adenine nucleotide metabolism. Adenylate kinase activity is critical for regulation of the phosphate utilization and the AMP de novo biosynthesis pathways. This Schizosaccharomyces pombe (strain 972 / ATCC 24843) (Fission yeast) protein is Adenylate kinase (adk1).